Reading from the N-terminus, the 294-residue chain is N-acetylmuramic acid 6-phosphate etherase (294 aa).

Residues 54–217 (VTKSFEEEGR…STASMIGVGK (164 aa)) form the SIS domain. Catalysis depends on glutamate 82, which acts as the Proton donor. Glutamate 113 is an active-site residue.

Belongs to the GCKR-like family. MurNAc-6-P etherase subfamily. As to quaternary structure, homodimer.

The catalysed reaction is N-acetyl-D-muramate 6-phosphate + H2O = N-acetyl-D-glucosamine 6-phosphate + (R)-lactate. Its pathway is amino-sugar metabolism; N-acetylmuramate degradation. Specifically catalyzes the cleavage of the D-lactyl ether substituent of MurNAc 6-phosphate, producing GlcNAc 6-phosphate and D-lactate. This chain is N-acetylmuramic acid 6-phosphate etherase, found in Bacillus mycoides (strain KBAB4) (Bacillus weihenstephanensis).